Reading from the N-terminus, the 452-residue chain is Minor capsid protein (452 aa).

2 stretches are compositionally biased toward basic and acidic residues: residues 219–236 (VDKPEDKPKPVFDDKGKQ) and 247–258 (GKPDISKPGEKQ). The tract at residues 219 to 258 (VDKPEDKPKPVFDDKGKQPTDTVPPVDNGKPDISKPGEKQ) is disordered.

Belongs to the closteroviridae minor capsid protein family.

Its subcellular location is the virion. Its function is as follows. Minor capsid protein that encapsidates the 5'-terminal portion of the viral genome. This chain is Minor capsid protein, found in Lettuce infectious yellows virus (isolate United States/92) (LIYV).